A 102-amino-acid polypeptide reads, in one-letter code: Urease subunit beta (102 aa).

This sequence belongs to the urease beta subunit family. As to quaternary structure, heterotrimer of UreA (gamma), UreB (beta) and UreC (alpha) subunits. Three heterotrimers associate to form the active enzyme.

The protein localises to the cytoplasm. The catalysed reaction is urea + 2 H2O + H(+) = hydrogencarbonate + 2 NH4(+). It functions in the pathway nitrogen metabolism; urea degradation; CO(2) and NH(3) from urea (urease route): step 1/1. This is Urease subunit beta from Blochmanniella pennsylvanica (strain BPEN).